A 190-amino-acid polypeptide reads, in one-letter code: Endoribonuclease YbeY (190 aa).

Zn(2+) is bound by residues H147, H151, and H157.

This sequence belongs to the endoribonuclease YbeY family. The cofactor is Zn(2+).

The protein localises to the cytoplasm. Its function is as follows. Single strand-specific metallo-endoribonuclease involved in late-stage 70S ribosome quality control and in maturation of the 3' terminus of the 16S rRNA. This chain is Endoribonuclease YbeY, found in Nitrobacter winogradskyi (strain ATCC 25391 / DSM 10237 / CIP 104748 / NCIMB 11846 / Nb-255).